We begin with the raw amino-acid sequence, 82 residues long: M-zodatoxin-Lt3b (82 aa).

The signal sequence occupies residues 1 to 22 (MKTYAVLLALVVAFVCIAESTG). Positions 23–61 (YPVEDLEDDELTELEAEALLEDLLEDLELEDLDYNEEAR) are excised as a propeptide. The short motif at 58 to 61 (EEAR) is the Processing quadruplet motif element. Alanine amide is present on Ala81.

Post-translationally, cleavage of the propeptide depends on the processing quadruplet motif (XXXR, with at least one of X being E). As to expression, expressed by the venom gland.

It is found in the secreted. Functionally, it has antimicrobial activity against Gram-positive bacteria (A.globiformis VKM Ac-1112 (MIC=0.7 uM), and B.subtilis VKM B-501 (MIC=2.9 uM)), Gram-negative bacteria (E.coli DH5-alpha (MIC=23 uM), E.coli MH1 (MIC=28 uM), and P.aeruginosa PAO1 (MIC&gt;45 uM)), and yeasts (P.pastoris GS115 (MIC=23 uM), and S.cerevisiae Y190 (MIC=23 uM)). Does not have hemolytic against rabbit erythrocytes. Causes paralysis, but is not lethal when injected into insect (M.domestica) larvae. The chain is M-zodatoxin-Lt3b from Lachesana tarabaevi (Spider).